A 517-amino-acid chain; its full sequence is Ladinin-1 (517 aa).

Residues 1–401 (MAVSRKDWSA…SASMKLPDNT (401 aa)) are disordered. S38 is subject to Phosphoserine. Residues 48-58 (LSQNGDRQASA) show a composition bias toward polar residues. S64, S78, S121, and S123 each carry phosphoserine. The span at 120 to 131 (NSLSPVQATQKP) shows a compositional bias: polar residues. 2 stretches are compositionally biased toward basic and acidic residues: residues 134–151 (SKKELEIPPRRRLSREQR) and 161–174 (LVGREPEERKKGVP). SEK repeat units follow at residues 203–205 (SEK), 209–211 (SEK), 215–217 (SEK), 221–223 (SEK), 227–229 (SEK), 239–241 (SEK), 257–259 (SEK), and 269–271 (SEK). Residues 203-271 (SEKVLASEKT…IFEKALASEK (69 aa)) are 8 X SEK repeats. A compositionally biased stretch (basic and acidic residues) spans 219-233 (AVSEKRNSSEKKSVL). 3 positions are modified to phosphoserine: S347, S356, and S394. The span at 355-373 (SSPTQRTYSSSLKRSSPRT) shows a compositional bias: polar residues. Position 424 is an omega-N-methylarginine (R424). The segment at 481-517 (RTQESGDQDPQEAQKASSATERTQWGQKSDSSLDAEV) is disordered. S485 carries the phosphoserine modification. Over residues 494–517 (QKASSATERTQWGQKSDSSLDAEV) the composition is skewed to polar residues.

It localises to the secreted. The protein localises to the extracellular space. It is found in the extracellular matrix. Its subcellular location is the basement membrane. In terms of biological role, anchoring filament protein which is a component of the basement membrane zone. In Homo sapiens (Human), this protein is Ladinin-1 (LAD1).